The chain runs to 341 residues: Uroporphyrinogen decarboxylase (341 aa).

Substrate-binding positions include 25-29 (RQAGR), Phe-44, Asp-74, Tyr-151, Ser-206, and His-318.

Belongs to the uroporphyrinogen decarboxylase family. In terms of assembly, homodimer.

The protein localises to the cytoplasm. The catalysed reaction is uroporphyrinogen III + 4 H(+) = coproporphyrinogen III + 4 CO2. It functions in the pathway porphyrin-containing compound metabolism; protoporphyrin-IX biosynthesis; coproporphyrinogen-III from 5-aminolevulinate: step 4/4. In terms of biological role, catalyzes the decarboxylation of four acetate groups of uroporphyrinogen-III to yield coproporphyrinogen-III. This Flavobacterium johnsoniae (strain ATCC 17061 / DSM 2064 / JCM 8514 / BCRC 14874 / CCUG 350202 / NBRC 14942 / NCIMB 11054 / UW101) (Cytophaga johnsonae) protein is Uroporphyrinogen decarboxylase.